A 68-amino-acid polypeptide reads, in one-letter code: UPF0352 protein CPS_2611 (68 aa).

The protein belongs to the UPF0352 family.

The chain is UPF0352 protein CPS_2611 from Colwellia psychrerythraea (strain 34H / ATCC BAA-681) (Vibrio psychroerythus).